The chain runs to 171 residues: Small ribosomal subunit protein uS5 (171 aa).

The S5 DRBM domain maps to 14–77 (LKEKLVMVNR…EKAKKKLLKI (64 aa)).

Belongs to the universal ribosomal protein uS5 family. Part of the 30S ribosomal subunit. Contacts proteins S4 and S8.

Its function is as follows. With S4 and S12 plays an important role in translational accuracy. In terms of biological role, located at the back of the 30S subunit body where it stabilizes the conformation of the head with respect to the body. This Karelsulcia muelleri (strain GWSS) (Sulcia muelleri) protein is Small ribosomal subunit protein uS5.